Here is a 125-residue protein sequence, read N- to C-terminus: Ixonnexin (125 aa).

The signal sequence occupies residues 1-21 (MGLTGTTLVLVCVAFFGSAAA). The N-linked (GlcNAc...) asparagine glycan is linked to Asn26. The segment at 81-125 (TSSGGPDDTGDNTPPPTEKPKQKKKKPKKTKKPKRKSKKDQKENF) is disordered. Basic residues predominate over residues 101–119 (KQKKKKPKKTKKPKRKSKK).

Belongs to the salp14 family. In terms of assembly, homodimer. Interacts with host PLG. Interacts with host PLAT. As to expression, saliva (at protein level).

The protein localises to the secreted. Functionally, salivary protein that promotes host fibrinolysis via accelerating host plasmin generation from plasminogen (PLG) initiated by tPA/tissue-type plasminogen activator (PLAT). Does not affect urokinase (PLAU)-mediated fibrinolysis in the host. Enhances amidolytic activity of host coagulation factor Xa (F10). The sequence is that of Ixonnexin from Ixodes scapularis (Black-legged tick).